We begin with the raw amino-acid sequence, 495 residues long: Glycerol kinase (495 aa).

Residue threonine 13 coordinates ADP. ATP contacts are provided by threonine 13, threonine 14, and serine 15. Threonine 13 contributes to the sn-glycerol 3-phosphate binding site. Arginine 17 contributes to the ADP binding site. Residues arginine 83, glutamate 84, tyrosine 135, and aspartate 244 each coordinate sn-glycerol 3-phosphate. Glycerol-binding residues include arginine 83, glutamate 84, tyrosine 135, aspartate 244, and glutamine 245. Threonine 266 and glycine 309 together coordinate ADP. ATP contacts are provided by threonine 266, glycine 309, glutamine 313, and glycine 410. Residues glycine 410 and asparagine 414 each contribute to the ADP site.

Belongs to the FGGY kinase family.

The catalysed reaction is glycerol + ATP = sn-glycerol 3-phosphate + ADP + H(+). The protein operates within polyol metabolism; glycerol degradation via glycerol kinase pathway; sn-glycerol 3-phosphate from glycerol: step 1/1. Inhibited by fructose 1,6-bisphosphate (FBP). Functionally, key enzyme in the regulation of glycerol uptake and metabolism. Catalyzes the phosphorylation of glycerol to yield sn-glycerol 3-phosphate. This Shewanella amazonensis (strain ATCC BAA-1098 / SB2B) protein is Glycerol kinase.